The sequence spans 179 residues: Large ribosomal subunit protein uL6 (179 aa).

Belongs to the universal ribosomal protein uL6 family. As to quaternary structure, part of the 50S ribosomal subunit.

Functionally, this protein binds to the 23S rRNA, and is important in its secondary structure. It is located near the subunit interface in the base of the L7/L12 stalk, and near the tRNA binding site of the peptidyltransferase center. This is Large ribosomal subunit protein uL6 from Chlorobium phaeobacteroides (strain DSM 266 / SMG 266 / 2430).